The primary structure comprises 489 residues: IPT/TIG domain-containing protein BACOVA_02650 (489 aa).

The first 27 residues, 1 to 27, serve as a signal peptide directing secretion; that stretch reads MKSIYKYLDTRLFLIGLLVLPFLAVVS. Cys28 is lipidated: N-palmitoyl cysteine. The S-diacylglycerol cysteine moiety is linked to residue Cys28. IPT/TIG domains are found at residues 57–103, 136–204, and 232–304; these read VNPG…PNEL, PYIT…TAPA, and PVVT…AIGG.

It is found in the cell outer membrane. Its pathway is glucan metabolism; xyloglucan degradation. Functionally, polysaccharide-binding protein present at the surface of the cell. Probably mediates xyloglucan-binding before xyloglucan transport in the periplasm for degradation. This chain is IPT/TIG domain-containing protein BACOVA_02650, found in Bacteroides ovatus (strain ATCC 8483 / DSM 1896 / JCM 5824 / BCRC 10623 / CCUG 4943 / NCTC 11153).